Here is a 353-residue protein sequence, read N- to C-terminus: Ferredoxin--NADP reductase (353 aa).

FAD contacts are provided by Thr25, Glu44, Gln52, Tyr57, Val97, Phe132, Asp298, and Ser339.

The protein belongs to the ferredoxin--NADP reductase type 2 family. As to quaternary structure, homodimer. Requires FAD as cofactor.

It carries out the reaction 2 reduced [2Fe-2S]-[ferredoxin] + NADP(+) + H(+) = 2 oxidized [2Fe-2S]-[ferredoxin] + NADPH. This Chlorobium phaeovibrioides (strain DSM 265 / 1930) (Prosthecochloris vibrioformis (strain DSM 265)) protein is Ferredoxin--NADP reductase.